The primary structure comprises 506 residues: Maturase K (506 aa).

This sequence belongs to the intron maturase 2 family. MatK subfamily.

Its subcellular location is the plastid. The protein localises to the chloroplast. Its function is as follows. Usually encoded in the trnK tRNA gene intron. Probably assists in splicing its own and other chloroplast group II introns. The chain is Maturase K from Gaultheria procumbens (Wintergreen).